A 520-amino-acid polypeptide reads, in one-letter code: ATP-dependent clpX-like chaperone, mitochondrial (520 aa).

The transit peptide at 1–13 (MLKSASQNFFRAY) directs the protein to the mitochondrion. 140–147 (GPSGSGKT) is an ATP binding site.

Belongs to the ClpX chaperone family. As to quaternary structure, homohexamer that forms a ring structure; this hexamerization requires ATP binding. Interacts with HEM1.

Its subcellular location is the mitochondrion inner membrane. In terms of biological role, ATP-dependent unfoldase that stimulates the incorporation of the pyridoxal phosphate cofactor into 5-aminolevulinate synthase (HEM1), thereby activating 5-aminolevulinate (ALA) synthesis, the first step in heme biosynthesis. Up-regulates heme biosynthesis. This Saccharomyces cerevisiae (strain ATCC 204508 / S288c) (Baker's yeast) protein is ATP-dependent clpX-like chaperone, mitochondrial.